The chain runs to 404 residues: Phosphoglycerate kinase (404 aa).

Substrate-binding positions include D22–N24, R37, H60–R63, R119, and R156. Residues K206, G302, E333, and G359–S362 each bind ATP.

It belongs to the phosphoglycerate kinase family. As to quaternary structure, monomer.

Its subcellular location is the cytoplasm. It catalyses the reaction (2R)-3-phosphoglycerate + ATP = (2R)-3-phospho-glyceroyl phosphate + ADP. Its pathway is carbohydrate degradation; glycolysis; pyruvate from D-glyceraldehyde 3-phosphate: step 2/5. The protein is Phosphoglycerate kinase of Clavibacter sepedonicus (Clavibacter michiganensis subsp. sepedonicus).